The primary structure comprises 293 residues: Mimecan (293 aa).

The signal sequence occupies residues 1–19 (MKTLQATFFLVAFVPLVKP). N60 carries N-linked (GlcNAc...) asparagine glycosylation. LRR repeat units follow at residues 107-126 (EAVP…FNKI), 127-150 (KRIA…GNMI), 151-174 (EEIE…ENRL), 175-194 (VKLP…QNRI), 195-220 (KSRG…HNAL), 221-241 (ESVP…HNNI), and 242-272 (TTIT…GNPI). Residues N240 and N253 are each glycosylated (N-linked (GlcNAc...) asparagine). A disulfide bridge connects residues C250 and C283.

Belongs to the small leucine-rich proteoglycan (SLRP) family. SLRP class III subfamily. In terms of processing, contains keratan sulfate. As to expression, expressed in many tissues.

The protein localises to the secreted. It is found in the extracellular space. Its subcellular location is the extracellular matrix. Its function is as follows. Induces bone formation in conjunction with TGF-beta-1 or TGF-beta-2. This Coturnix japonica (Japanese quail) protein is Mimecan (OGN).